Reading from the N-terminus, the 141-residue chain is 16 kDa protein (141 aa).

The interval 100–119 (TVKKSRNSKPSKKKFKERKE) is disordered. Residues 102-115 (KKSRNSKPSKKKFK) show a composition bias toward basic residues.

The polypeptide is 16 kDa protein (Tobacco rattle virus (strain PLB)).